Here is a 187-residue protein sequence, read N- to C-terminus: DNA-3-methyladenine glycosylase 1 (187 aa).

Zn(2+)-binding residues include Cys4, His17, His175, and Cys179.

It catalyses the reaction Hydrolysis of alkylated DNA, releasing 3-methyladenine.. With respect to regulation, activity is controlled by product inhibition. In terms of biological role, hydrolysis of the deoxyribose N-glycosidic bond to excise 3-methyladenine from the damaged DNA polymer formed by alkylation lesions. This chain is DNA-3-methyladenine glycosylase 1, found in Escherichia coli (strain K12).